The chain runs to 119 residues: Achromolysin (119 aa).

This sequence belongs to the peptidase M4 family. Ca(2+) serves as cofactor. Zn(2+) is required as a cofactor.

Its subcellular location is the secreted. Its function is as follows. Has staphylolytic activity. This chain is Achromolysin, found in Achromobacter lyticus.